The following is a 92-amino-acid chain: YcgL domain-containing protein Sama_1929 (92 aa).

One can recognise a YcgL domain in the interval 1-85 (MICAVYKSSR…PKDNLLTQHR (85 aa)).

This is YcgL domain-containing protein Sama_1929 from Shewanella amazonensis (strain ATCC BAA-1098 / SB2B).